The sequence spans 208 residues: Large ribosomal subunit protein uL3 (208 aa).

The tract at residues 130–168 (GGSKTHGQSDRLRAPGSVGGSSFPSRTFKGQRMAGRKGS) is disordered.

It belongs to the universal ribosomal protein uL3 family. In terms of assembly, part of the 50S ribosomal subunit. Forms a cluster with proteins L14 and L19.

Its function is as follows. One of the primary rRNA binding proteins, it binds directly near the 3'-end of the 23S rRNA, where it nucleates assembly of the 50S subunit. The protein is Large ribosomal subunit protein uL3 of Chloroherpeton thalassium (strain ATCC 35110 / GB-78).